Reading from the N-terminus, the 496-residue chain is Cyclin-dependent kinase 16 (496 aa).

The disordered stretch occupies residues 1–97 (MDRMKKIKRQ…TSSDEVQSPV (97 aa)). The residue at position 12 (S12) is a Phosphoserine; by BRSK2. Phosphoserine occurs at positions 36, 42, 64, 65, 78, 82, and 89. The segment covering 69–78 (IVHEDLKMGS) has biased composition (basic and acidic residues). Over residues 83–93 (DQASATSSDEV) the composition is skewed to polar residues. Residue S95 is modified to Phosphoserine; by CDK5. 6 positions are modified to phosphoserine: S110, S119, S138, S146, S153, and S155. In terms of domain architecture, Protein kinase spans 165-446 (YIKLDKLGEG…AEDAMKHPFF (282 aa)). Residues 171 to 179 (LGEGTYATV) and K194 contribute to the ATP site. Position 175 is a phosphothreonine (T175). The active-site Proton acceptor is D286. T380 is subject to Phosphothreonine. 3 positions are modified to phosphoserine: S391, S478, and S480.

It belongs to the protein kinase superfamily. CMGC Ser/Thr protein kinase family. CDC2/CDKX subfamily. Found in a complex containing CABLES1, CDK17 and TDRD7. Interacts with BRSK2. Identified in a complex with NSF, syntaxin-1, synaptotagmin, SYN1, SYP and CDK5R1. Interacts with YWHAH, YWHAQ and YWHAZ. Interacts with CCNY; this interaction increases the CDK16 kinase activity. Interacts with CCNYL1; this interaction mutually increases the stability of CDK16 and CCNYL1 and increases the kinase activity of CDK16. Interacts with NSF. In terms of processing, phosphorylation of CDK16 is essential for the binding of CCNY, but also essential for the regulation of CDK16 kinase activity. Phosphorylation of CDK16 is essential for the binding of CCNYl1, but also essential for the regulation of CDK16 kinase activity. Ser-146 and Ser-153 are the most critical sites for the binding of CCNYL1 and for modulating CDK16 kinase activity. Phosphorylation at Ser-153 inhibits kinase activity. As to expression, detected in pancreas islets (at protein level). Detected in brain and pancreas.

It localises to the cytoplasm. The protein resides in the cytoplasmic vesicle. Its subcellular location is the secretory vesicle. The protein localises to the cell membrane. It is found in the synapse. It localises to the synaptosome. The catalysed reaction is L-seryl-[protein] + ATP = O-phospho-L-seryl-[protein] + ADP + H(+). It catalyses the reaction L-threonyl-[protein] + ATP = O-phospho-L-threonyl-[protein] + ADP + H(+). Functionally, protein kinase that plays a role in vesicle-mediated transport processes and exocytosis. Regulates GH1 release by brain neurons. Phosphorylates NSF, and thereby regulates NSF oligomerization. Required for normal spermatogenesis. Regulates neuron differentiation and dendrite development. Plays a role in the regulation of insulin secretion in response to changes in blood glucose levels. Can phosphorylate CCNY at 'Ser-336' (in vitro). This is Cyclin-dependent kinase 16 (CDK16) from Homo sapiens (Human).